A 501-amino-acid chain; its full sequence is Cell division control protein 24 (501 aa).

As to quaternary structure, interacts with dna2, pcn1 and rfc1.

The protein localises to the nucleus. It is found in the cytoplasm. In terms of biological role, has a role in the progression of DNA replication and in the maintenance of genomic integrity. Acts during S phase, after initiation, where it is essential for completion. In Schizosaccharomyces pombe (strain 972 / ATCC 24843) (Fission yeast), this protein is Cell division control protein 24 (cdc24).